Here is a 284-residue protein sequence, read N- to C-terminus: MKDSHQTIGVFVRPTHYQNPLFEELERAKEWVLKLLEDEGFESFMIDSLDGAQDERLIEKAYAFLCLGGDGTILGALRMTHSYNKPCFGVRIGNLGFLSAVELNGLKDFLQDLKQDRIKLEEHLALEGRIGKISFYAINEIVIAKKKALGVLDIKAYAGHTPFNTYKGDGLIIATPLGSTAYNLSAHGPIVHALSQSYILTPLCDFSLTQRPLVLGAEFCLNFCAHEDALVVIDGQATYDLKANQPLYIQKSPTTTKLLQKNSRDYFKVLKEKLLWGESPSKKR.

The Proton acceptor role is filled by Asp70. NAD(+) contacts are provided by residues 70–71, 139–140, Lys167, Asp169, Leu177, 180–185, and Gln236; these read DG, NE, and TAYNLS.

This sequence belongs to the NAD kinase family. The cofactor is a divalent metal cation.

The protein resides in the cytoplasm. It catalyses the reaction NAD(+) + ATP = ADP + NADP(+) + H(+). Functionally, involved in the regulation of the intracellular balance of NAD and NADP, and is a key enzyme in the biosynthesis of NADP. Catalyzes specifically the phosphorylation on 2'-hydroxyl of the adenosine moiety of NAD to yield NADP. The sequence is that of NAD kinase from Helicobacter pylori (strain G27).